Here is a 755-residue protein sequence, read N- to C-terminus: Proprotein convertase subtilisin/kexin type 4 (755 aa).

The N-terminal stretch at 1–25 (MRPAPIALWLRLVLALALVRPRAVG) is a signal peptide. The propeptide occupies 26 to 113 (WAPVRAPIYV…QQTLQRRVKR (88 aa)). Residues 126 to 440 (QWYMNSEAQP…YGLLDAGLLV (315 aa)) form the Peptidase S8 domain. Active-site charge relay system residues include aspartate 158, histidine 199, and serine 373. The P/Homo B domain maps to 449-581 (TQPQRKCAVR…TLLLYGTAED (133 aa)). 2 N-linked (GlcNAc...) asparagine glycosylation sites follow: asparagine 475 and asparagine 629. A helical membrane pass occupies residues 709–729 (AMVLSLLAVTLGGPVLCGMSM).

It belongs to the peptidase S8 family. Furin subfamily. As to quaternary structure, the proPCSK4 form interacts with HSPA5; the interaction takes place at the endoplasmic reticulum. N-glycosylated. Post-translationally, synthesized in the endoplasmic reticulum as a zymogen, is matured by autocatalytic cleavage between the prodomain and the catalytic domain. In terms of tissue distribution, placenta.

It localises to the membrane. The protein resides in the cytoplasmic vesicle. Its subcellular location is the secretory vesicle. The protein localises to the acrosome membrane. Functionally, proprotein convertase involved in the processing of hormone and other protein precursors at sites comprised of pairs of basic amino acid residues. In males, important for ADAM2 processing as well as other acrosomal proteins with roles in fertilization and critical for normal fertilization events such as sperm capacitation, acrosome reaction and binding of sperm to zona pellucida. Also plays a role in female fertility, involved in the regulation of trophoblast migration and placental development, may be through the proteolytical processing and activation of proteins such as IGF2. May also participate in folliculogenesis in the ovaries. The sequence is that of Proprotein convertase subtilisin/kexin type 4 from Homo sapiens (Human).